A 544-amino-acid chain; its full sequence is Chaperonin GroEL (544 aa).

Residues 30–33, lysine 51, 87–91, glycine 415, 481–483, and aspartate 497 contribute to the ATP site; these read TLGP, DGTTT, and DAL.

It belongs to the chaperonin (HSP60) family. In terms of assembly, forms a cylinder of 14 subunits composed of two heptameric rings stacked back-to-back. Interacts with the co-chaperonin GroES.

It localises to the cytoplasm. The enzyme catalyses ATP + H2O + a folded polypeptide = ADP + phosphate + an unfolded polypeptide.. In terms of biological role, together with its co-chaperonin GroES, plays an essential role in assisting protein folding. The GroEL-GroES system forms a nano-cage that allows encapsulation of the non-native substrate proteins and provides a physical environment optimized to promote and accelerate protein folding. The sequence is that of Chaperonin GroEL from Chlamydia trachomatis serovar L2 (strain ATCC VR-902B / DSM 19102 / 434/Bu).